The chain runs to 87 residues: Large ribosomal subunit protein bL31B (87 aa).

Belongs to the bacterial ribosomal protein bL31 family. Type B subfamily. As to quaternary structure, part of the 50S ribosomal subunit.

The sequence is that of Large ribosomal subunit protein bL31B from Latilactobacillus sakei subsp. sakei (strain 23K) (Lactobacillus sakei subsp. sakei).